The primary structure comprises 2297 residues: Xin actin-binding repeat-containing protein 1 (2297 aa).

Residues 1-11 are compositionally biased toward basic and acidic residues; sequence MAEVAKQKKAT. Residues 1-28 are disordered; sequence MAEVAKQKKATEAVCGDEDFPPPPPPLP. 9 Xin repeats span residues 104–119, 139–154, 169–184, 208–223, 248–263, 286–301, 323–338, 362–377, and 396–411; these read GEVQ…WTLD, GDVK…STFD, GDVR…QPLD, GDVT…KPLD, GDVK…DPCC, SDFK…QPLD, GGVD…QPLD, ADVH…QPLS, and GNVG…QPMD. Over residues 433–442 the composition is skewed to basic and acidic residues; the sequence is GEVQDKRMQF. Positions 433–461 are disordered; sequence GEVQDKRMQFEKSTAGKTAGDSGNKVQND. Xin repeat units follow at residues 464–479, 494–509, 532–547, 570–585, 605–620, 638–653, 677–692, 715–730, 747–762, 779–794, 818–833, 856–871, 893–908, and 928–943; these read GDVK…LPLN, GDVK…TPLY, GNVQ…RPLD, DDTR…QPLD, SNVK…KPMD, ADVK…QPLD, VNVK…EPLD, GDVS…KSLG, GSVH…QPIG, GDVG…LSLD, VNVK…QPLY, GDVR…KPLD, GDVK…QPLD, and KCVQ…EQAS. Residue serine 952 is modified to Phosphoserine. 3 Xin repeats span residues 959-974, 997-1012, and 1033-1048; these read GDVR…QPID, GDVK…QSLD, and ADVK…TPLD. Disordered stretches follow at residues 1617 to 1680, 1866 to 1900, 2147 to 2191, and 2243 to 2297; these read PSSH…KDQK, KENI…VPSI, SAAR…PRRK, and ELSS…TEKH. Low complexity-rich tracts occupy residues 1618-1630 and 1644-1656; these read SSHT…VSVT and SVSS…KNSS. Basic and acidic residues-rich tracts occupy residues 1876–1885 and 2151–2162; these read SNKDELHFTS and KPAESPTDKPKT. The span at 2166–2180 shows a compositional bias: low complexity; that stretch reads QSNAGSSSSQNSSAS. A compositionally biased stretch (polar residues) spans 2259 to 2278; it reads GMTSPVLQRSGQSFSSNSLS.

This sequence belongs to the Xin family. In terms of tissue distribution, expressed at intercalated disks in the heart (at protein level).

It is found in the cell junction. It localises to the adherens junction. Its subcellular location is the desmosome. In terms of biological role, positively regulates organization of the outer plexiform layer and Muller glia cells in the retina. May protect actin filaments from depolymerization. May play a role in development of normal skeletal muscle morphology and muscle fiber type composition. The polypeptide is Xin actin-binding repeat-containing protein 1 (Danio rerio (Zebrafish)).